The following is a 427-amino-acid chain: Synaptotagmin-A (427 aa).

Over Met-1–Lys-57 the chain is Vesicular. N-linked (GlcNAc...) asparagine glycosylation occurs at Asn-26. A helical transmembrane segment spans residues Ile-58–Cys-84. At Lys-85 to Lys-427 the chain is on the cytoplasmic side. Residues Lys-96–Asp-145 are disordered. Positions Lys-109–Lys-124 are enriched in basic and acidic residues. Residues Glu-141–Asn-387 form a phospholipid binding region. C2 domains are found at residues Lys-147–Arg-266 and Lys-278–His-411. Residues Leu-177, Asp-178, Asp-184, Asp-236, Phe-237, Asp-238, Ser-241, Lys-242, Asp-244, Asp-309, Asp-315, Asp-369, Asp-371, and Asp-377 each contribute to the Ca(2+) site.

It belongs to the synaptotagmin family. Homodimer or homotrimer (possible). It depends on Ca(2+) as a cofactor. As to expression, forebrain, cerebellum and neuroendocrine cells.

The protein resides in the cytoplasmic vesicle. The protein localises to the secretory vesicle. It is found in the synaptic vesicle membrane. Its subcellular location is the synapse. In terms of biological role, may have a regulatory role in the membrane interactions during trafficking of synaptic vesicles at the active zone of the synapse. It binds acidic phospholipids with a specificity that requires the presence of both an acidic head group and a diacyl backbone. The sequence is that of Synaptotagmin-A (P65-A) from Diplobatis ommata (Ocellated electric ray).